The sequence spans 778 residues: NAD-dependent deacetylase sir2B (778 aa).

9 ANK repeats span residues 83 to 112 (LNWT…EISI), 114 to 142 (RYTA…VPNG), 148 to 178 (DMET…SMNS), 191 to 221 (HGVS…DINS), 225 to 255 (DNST…ELMN), 260 to 289 (YGNS…KIII), 317 to 354 (DGST…QVNG), 358 to 390 (GNAT…DPTI), and 394 to 423 (YGWT…LTNS). The interval 438 to 458 (SSTSTSSSSSSSSSSSSSSSS) is disordered. Residues 465 to 778 (KEELKLKGIE…DYFNTLFNSF (314 aa)) form the Deacetylase sirtuin-type domain. H608 serves as the catalytic Proton acceptor. Zn(2+)-binding residues include C616, C619, C642, and C647. A disordered region spans residues 727–746 (KLKQQQENESGESSNDNDNN). Residues 733–746 (ENESGESSNDNDNN) are compositionally biased toward low complexity.

It belongs to the sirtuin family. Requires Zn(2+) as cofactor.

The enzyme catalyses N(6)-acetyl-L-lysyl-[protein] + NAD(+) + H2O = 2''-O-acetyl-ADP-D-ribose + nicotinamide + L-lysyl-[protein]. Functionally, NAD-dependent deacetylase, which plays an important role in the regulation of transcriptional repression. In Dictyostelium discoideum (Social amoeba), this protein is NAD-dependent deacetylase sir2B (sir2B).